Consider the following 246-residue polypeptide: Carboxy-S-adenosyl-L-methionine synthase (246 aa).

S-adenosyl-L-methionine contacts are provided by residues Tyr-39, 64 to 66 (GCS), 89 to 90 (DN), 117 to 118 (DI), Asn-132, and Arg-199.

This sequence belongs to the class I-like SAM-binding methyltransferase superfamily. Cx-SAM synthase family. As to quaternary structure, homodimer.

It carries out the reaction prephenate + S-adenosyl-L-methionine = carboxy-S-adenosyl-L-methionine + 3-phenylpyruvate + H2O. In terms of biological role, catalyzes the conversion of S-adenosyl-L-methionine (SAM) to carboxy-S-adenosyl-L-methionine (Cx-SAM). The sequence is that of Carboxy-S-adenosyl-L-methionine synthase from Erwinia tasmaniensis (strain DSM 17950 / CFBP 7177 / CIP 109463 / NCPPB 4357 / Et1/99).